A 188-amino-acid chain; its full sequence is dCTP deaminase (188 aa).

Residues 111-116, 135-137, glutamine 156, tyrosine 170, and glutamine 180 contribute to the dCTP site; these read KSTYAR and TLE. Catalysis depends on glutamate 137, which acts as the Proton donor/acceptor.

Belongs to the dCTP deaminase family. In terms of assembly, homotrimer.

The catalysed reaction is dCTP + H2O + H(+) = dUTP + NH4(+). The protein operates within pyrimidine metabolism; dUMP biosynthesis; dUMP from dCTP (dUTP route): step 1/2. In terms of biological role, catalyzes the deamination of dCTP to dUTP. The chain is dCTP deaminase from Coxiella burnetii (strain CbuK_Q154) (Coxiella burnetii (strain Q154)).